Reading from the N-terminus, the 150-residue chain is Urease accessory protein UreE (150 aa).

It belongs to the UreE family.

Its subcellular location is the cytoplasm. Its function is as follows. Involved in urease metallocenter assembly. Binds nickel. Probably functions as a nickel donor during metallocenter assembly. This is Urease accessory protein UreE from Staphylococcus aureus (strain MRSA252).